The primary structure comprises 142 residues: AP-2 complex subunit sigma (142 aa).

Belongs to the adaptor complexes small subunit family. As to quaternary structure, adaptor protein complex 2 (AP-2) is a heterotetramer composed of two large adaptins (alpha-type and beta-type subunits), a medium adaptin (mu-type subunit AP50) and a small adaptin (sigma-type subunit AP17).

It localises to the cell membrane. The protein localises to the membrane. Its subcellular location is the coated pit. Component of the adaptor complexes which link clathrin to receptors in coated vesicles. Clathrin-associated protein complexes are believed to interact with the cytoplasmic tails of membrane proteins, leading to their selection and concentration. The chain is AP-2 complex subunit sigma (ap2s1) from Dictyostelium discoideum (Social amoeba).